The sequence spans 341 residues: MKVSDFDYELPESHIARYPPDERGSTRLLVLQRSTGEIMHSRYAGLHGFLRKGDLLVLNNSRVVKARMFAFKPTGGKIELVLLEKHGDEQNLVLYRGSLKKGDALLAYGCEFGVEELVGQGVAVLSVKGEGTVQDVFERYAAMPIPPYLKREAEEIDRERYQTVFAEQPGSVAAPTASLNMTGELFDSLRQKGVSIASMTLHVGLGTFLPIRVDHFDEHVMHREFYVIPDETIALIRTTKNNGGRVIAVGTTVTRALEHAADVVFNSNGNGSVSGEADIFIYPGYRFRVIDALLTNFHAPRSTVLMLTAAFAGAEKLFHAYAEALRWEYDFLSYGDSMLIL.

This sequence belongs to the QueA family. In terms of assembly, monomer.

It localises to the cytoplasm. The catalysed reaction is 7-aminomethyl-7-carbaguanosine(34) in tRNA + S-adenosyl-L-methionine = epoxyqueuosine(34) in tRNA + adenine + L-methionine + 2 H(+). The protein operates within tRNA modification; tRNA-queuosine biosynthesis. Transfers and isomerizes the ribose moiety from AdoMet to the 7-aminomethyl group of 7-deazaguanine (preQ1-tRNA) to give epoxyqueuosine (oQ-tRNA). The sequence is that of S-adenosylmethionine:tRNA ribosyltransferase-isomerase from Chlorobium phaeobacteroides (strain DSM 266 / SMG 266 / 2430).